A 185-amino-acid chain; its full sequence is Small ribosomal subunit protein uS4c (185 aa).

The region spanning 72 to 134 (MRLDNVIFRL…PTSCNALKGE (63 aa)) is the S4 RNA-binding domain. The segment at 132 to 154 (KGESPGGGETPDHLTASLSEGSR) is disordered.

This sequence belongs to the universal ribosomal protein uS4 family. As to quaternary structure, part of the 30S ribosomal subunit. Contacts protein S5. The interaction surface between S4 and S5 is involved in control of translational fidelity.

The protein localises to the plastid. It localises to the chloroplast. One of the primary rRNA binding proteins, it binds directly to 16S rRNA where it nucleates assembly of the body of the 30S subunit. Its function is as follows. With S5 and S12 plays an important role in translational accuracy. The protein is Small ribosomal subunit protein uS4c (rps4) of Woodwardia unigemmata (Chainfern).